Consider the following 91-residue polypeptide: Large ribosomal subunit protein uL23c (91 aa).

The protein belongs to the universal ribosomal protein uL23 family. In terms of assembly, part of the 50S ribosomal subunit.

Its subcellular location is the plastid. It is found in the chloroplast. In terms of biological role, binds to 23S rRNA. The polypeptide is Large ribosomal subunit protein uL23c (rpl23) (Physcomitrium patens (Spreading-leaved earth moss)).